The following is a 61-amino-acid chain: Probable tautomerase SERP0934 (61 aa).

The active-site Proton acceptor; via imino nitrogen is the P2.

It belongs to the 4-oxalocrotonate tautomerase family.

This chain is Probable tautomerase SERP0934, found in Staphylococcus epidermidis (strain ATCC 35984 / DSM 28319 / BCRC 17069 / CCUG 31568 / BM 3577 / RP62A).